Reading from the N-terminus, the 446-residue chain is Trigger factor (446 aa).

In terms of domain architecture, PPIase FKBP-type spans 161–246 (GDRLTIDFKG…VSKVERSELP (86 aa)). The interval 422 to 446 (VSYEDAVKPRTAPAEQAEDGEQSAE) is disordered. The segment covering 437–446 (QAEDGEQSAE) has biased composition (acidic residues).

Belongs to the FKBP-type PPIase family. Tig subfamily.

The protein localises to the cytoplasm. It catalyses the reaction [protein]-peptidylproline (omega=180) = [protein]-peptidylproline (omega=0). Functionally, involved in protein export. Acts as a chaperone by maintaining the newly synthesized protein in an open conformation. Functions as a peptidyl-prolyl cis-trans isomerase. This Hahella chejuensis (strain KCTC 2396) protein is Trigger factor.